The sequence spans 108 residues: Small ribosomal subunit protein uS10 (108 aa).

This sequence belongs to the universal ribosomal protein uS10 family. As to quaternary structure, part of the 30S ribosomal subunit.

Involved in the binding of tRNA to the ribosomes. The sequence is that of Small ribosomal subunit protein uS10 from Ehrlichia canis (strain Jake).